A 431-amino-acid polypeptide reads, in one-letter code: Enolase (431 aa).

Gln163 is a binding site for (2R)-2-phosphoglycerate. The active-site Proton donor is Glu205. Mg(2+) contacts are provided by Asp242, Glu288, and Asp315. 4 residues coordinate (2R)-2-phosphoglycerate: Lys340, Arg369, Ser370, and Lys391. Catalysis depends on Lys340, which acts as the Proton acceptor.

This sequence belongs to the enolase family. Requires Mg(2+) as cofactor.

It is found in the cytoplasm. It localises to the secreted. The protein localises to the cell surface. It carries out the reaction (2R)-2-phosphoglycerate = phosphoenolpyruvate + H2O. The protein operates within carbohydrate degradation; glycolysis; pyruvate from D-glyceraldehyde 3-phosphate: step 4/5. Catalyzes the reversible conversion of 2-phosphoglycerate (2-PG) into phosphoenolpyruvate (PEP). It is essential for the degradation of carbohydrates via glycolysis. In Bacillus cereus (strain G9842), this protein is Enolase.